The sequence spans 1013 residues: AP-2 complex subunit alpha-2 (1013 aa).

HEAT repeat units follow at residues 254 to 289, 354 to 391, 393 to 430, and 521 to 565; these read AMRA…VVKN, DIIK…VSNA, DIVE…DLSW, and TVST…CIDV. The disordered stretch occupies residues 652–676; sequence STDPESVARSLSHPNGTLSNIDPQT. Polar residues predominate over residues 663–675; the sequence is SHPNGTLSNIDPQ. Residues 742–841 form the GAE domain; that stretch reads ALCLKDSGVL…LDFSYKFGTN (100 aa). Residues 760 to 1013 are required for AP180 binding; it reads GIKAEWRGHH…DPGAMLAGLL (254 aa).

This sequence belongs to the adaptor complexes large subunit family. As to quaternary structure, adaptor protein complex 2 (AP-2) is a heterotetramer composed of two large adaptins (alpha-type and beta-type subunits), a medium adaptin (mu-type subunit) and a small adaptin (sigma-type subunit). Interacts with AP180.

It is found in the membrane. It localises to the coated pit. Functionally, subunit of the adaptor protein complex 2 (AP-2). Adaptor protein complexes function in protein transport via transport vesicles in different membrane traffic pathways. Adaptor protein complexes are vesicle coat components and appear to be involved in cargo selection and vesicle formation. AP-2 is involved in clathrin-dependent endocytosis in which cargo proteins are incorporated into vesicles surrounded by clathrin (clathrin-coated vesicles, CCVs) which are destined for fusion with the early endosome. The complex binds polyphosphoinositides. This is AP-2 complex subunit alpha-2 (ALPHAC-AD) from Arabidopsis thaliana (Mouse-ear cress).